Reading from the N-terminus, the 96-residue chain is Acetolactate synthase isozyme 1 small subunit (96 aa).

An ACT domain is found at 10–83; the sequence is ILELTVRNHP…DVVKVQRNQS (74 aa).

The protein belongs to the acetolactate synthase small subunit family. As to quaternary structure, dimer of large and small chains.

The catalysed reaction is 2 pyruvate + H(+) = (2S)-2-acetolactate + CO2. The protein operates within amino-acid biosynthesis; L-isoleucine biosynthesis; L-isoleucine from 2-oxobutanoate: step 1/4. Its pathway is amino-acid biosynthesis; L-valine biosynthesis; L-valine from pyruvate: step 1/4. The sequence is that of Acetolactate synthase isozyme 1 small subunit (ilvN) from Escherichia coli O157:H7.